Reading from the N-terminus, the 172-residue chain is Large ribosomal subunit protein uL10 (172 aa).

The protein belongs to the universal ribosomal protein uL10 family. In terms of assembly, part of the ribosomal stalk of the 50S ribosomal subunit. The N-terminus interacts with L11 and the large rRNA to form the base of the stalk. The C-terminus forms an elongated spine to which L12 dimers bind in a sequential fashion forming a multimeric L10(L12)X complex.

Forms part of the ribosomal stalk, playing a central role in the interaction of the ribosome with GTP-bound translation factors. In Xanthobacter autotrophicus (strain ATCC BAA-1158 / Py2), this protein is Large ribosomal subunit protein uL10.